A 323-amino-acid chain; its full sequence is Porphobilinogen deaminase (323 aa).

At cysteine 251 the chain carries S-(dipyrrolylmethanemethyl)cysteine.

Belongs to the HMBS family. As to quaternary structure, monomer. The cofactor is dipyrromethane.

The enzyme catalyses 4 porphobilinogen + H2O = hydroxymethylbilane + 4 NH4(+). It participates in porphyrin-containing compound metabolism; protoporphyrin-IX biosynthesis; coproporphyrinogen-III from 5-aminolevulinate: step 2/4. The protein operates within porphyrin-containing compound metabolism; chlorophyll biosynthesis. In terms of biological role, tetrapolymerization of the monopyrrole PBG into the hydroxymethylbilane pre-uroporphyrinogen in several discrete steps. This Nostoc sp. (strain PCC 7120 / SAG 25.82 / UTEX 2576) protein is Porphobilinogen deaminase (hemC).